The sequence spans 527 residues: Glucose-6-phosphate isomerase (527 aa).

Catalysis depends on Glu347, which acts as the Proton donor. Residues His378 and Lys493 contribute to the active site.

Belongs to the GPI family.

The protein resides in the cytoplasm. It carries out the reaction alpha-D-glucose 6-phosphate = beta-D-fructose 6-phosphate. Its pathway is carbohydrate biosynthesis; gluconeogenesis. The protein operates within carbohydrate degradation; glycolysis; D-glyceraldehyde 3-phosphate and glycerone phosphate from D-glucose: step 2/4. Its function is as follows. Catalyzes the reversible isomerization of glucose-6-phosphate to fructose-6-phosphate. The sequence is that of Glucose-6-phosphate isomerase from Chlamydia caviae (strain ATCC VR-813 / DSM 19441 / 03DC25 / GPIC) (Chlamydophila caviae).